A 950-amino-acid polypeptide reads, in one-letter code: MITIPSHEFTDLLNEISKKWQEEWSKNRIFEADPKDQKKFFTTVAFPYPNSPFHLGHGRTYVTGDVYARFMRMKGYNVLFPMGFHFTGTPIITMADDVAKGDKDLLDIFQNIYEIPADVIPKLSDPLFMANYFKEDIKAAMREIGLSIDWRREFTTIDPQFSAFIVWQFSKLQKKGYVVKDTHPVGWCPVHNLPVGMHDTKGDMEPEIGEYVVIFFESKMGALAAATLRPETIFGAVAVWVNPKATYTVAEIWGKKVIVSEKAAEKLKFQTDVKVLEKVSGSDLLKIVAINPITGKEIPILPADFVDPTTATGVVMSVPAHAPFDYFYLKKAKVGIEPIPVVAVEGQGDAPAKDLVESSHPKNDADLKKLTEQLYRLEFNKGLMRSDILRLVKDELRAELSVVAGKQVPEARKMVTDILIQRKAGTKMLEIMNKPVYCRCGNEVVVKILQDQWFLDYGNPEWKAKAKKLLDSMRVIPEETRKDFEYALDWLQKRACARTRGLGTPLPWDKKWIIESLSDSTIYMAYYTLSHKIKEFGLHPSQLTEETWDYIMLGEGDVKAISERNKIGVDALQELRRHFTYWYPLDLRHSGPDLIPNHLSFFIFNHAGIFPENLWPRGVAVNGFILYEGKKMSKSLRNIVPLRKAIRTYGADVIRIALSSLVDMSSDANFTEAGARAIADNLKRFYELMQMQDGSTIDGTPEKWLRSKLHRLVRDVTPLMESMRFREVINELLFNLSSYINEYLEMVRSESREYNRDVIREVVETWTKLMAPFAPHLTEEMWHQLGHNTFLSLESWPTPDNSKINDQIELEHEYHKLLIEDIRAILNVYKGKPSSVLLYVHDGSLNQVVKSALDVLNSGGTMKDFMQKNTPKSKEEARVLQRIMQYVTEMPETVKKLIYSNVNEMEVTRKGVPLLRYKLNLEIEVLAYTQEVKQKLNKDALPYRPAILVK.

Positions Pro-47–His-57 match the 'HIGH' region motif. Positions Lys-631–Ser-635 match the 'KMSKS' region motif. Lys-634 is a binding site for ATP.

The protein belongs to the class-I aminoacyl-tRNA synthetase family.

It is found in the cytoplasm. The enzyme catalyses tRNA(Leu) + L-leucine + ATP = L-leucyl-tRNA(Leu) + AMP + diphosphate. In Metallosphaera sedula (strain ATCC 51363 / DSM 5348 / JCM 9185 / NBRC 15509 / TH2), this protein is Leucine--tRNA ligase 2.